Reading from the N-terminus, the 210-residue chain is Probable nicotinate-nucleotide adenylyltransferase (210 aa).

Belongs to the NadD family.

It carries out the reaction nicotinate beta-D-ribonucleotide + ATP + H(+) = deamido-NAD(+) + diphosphate. It functions in the pathway cofactor biosynthesis; NAD(+) biosynthesis; deamido-NAD(+) from nicotinate D-ribonucleotide: step 1/1. Functionally, catalyzes the reversible adenylation of nicotinate mononucleotide (NaMN) to nicotinic acid adenine dinucleotide (NaAD). The protein is Probable nicotinate-nucleotide adenylyltransferase of Streptococcus pyogenes serotype M1.